Reading from the N-terminus, the 216-residue chain is Peptide methionine sulfoxide reductase MsrA (216 aa).

The active site involves cysteine 58.

It belongs to the MsrA Met sulfoxide reductase family.

It carries out the reaction L-methionyl-[protein] + [thioredoxin]-disulfide + H2O = L-methionyl-(S)-S-oxide-[protein] + [thioredoxin]-dithiol. The enzyme catalyses [thioredoxin]-disulfide + L-methionine + H2O = L-methionine (S)-S-oxide + [thioredoxin]-dithiol. Functionally, has an important function as a repair enzyme for proteins that have been inactivated by oxidation. Catalyzes the reversible oxidation-reduction of methionine sulfoxide in proteins to methionine. The protein is Peptide methionine sulfoxide reductase MsrA of Azotobacter vinelandii (strain DJ / ATCC BAA-1303).